The sequence spans 288 residues: 4-diphosphocytidyl-2-C-methyl-D-erythritol kinase (288 aa).

Lysine 11 is an active-site residue. 93-103 (PFGAGLGGGSS) provides a ligand contact to ATP. Aspartate 135 is an active-site residue.

This sequence belongs to the GHMP kinase family. IspE subfamily.

The enzyme catalyses 4-CDP-2-C-methyl-D-erythritol + ATP = 4-CDP-2-C-methyl-D-erythritol 2-phosphate + ADP + H(+). It participates in isoprenoid biosynthesis; isopentenyl diphosphate biosynthesis via DXP pathway; isopentenyl diphosphate from 1-deoxy-D-xylulose 5-phosphate: step 3/6. In terms of biological role, catalyzes the phosphorylation of the position 2 hydroxy group of 4-diphosphocytidyl-2C-methyl-D-erythritol. This Chlorobium limicola (strain DSM 245 / NBRC 103803 / 6330) protein is 4-diphosphocytidyl-2-C-methyl-D-erythritol kinase.